The following is a 557-amino-acid chain: Urocanate hydratase (557 aa).

Residues 53 to 54, Q131, 177 to 179, E197, R202, 243 to 244, 264 to 268, 274 to 275, and Y323 contribute to the NAD(+) site; these read GG, GMG, NA, QTSAH, and YL. Residue C411 is part of the active site. Position 493 (G493) interacts with NAD(+).

This sequence belongs to the urocanase family. NAD(+) is required as a cofactor.

It is found in the cytoplasm. The catalysed reaction is 4-imidazolone-5-propanoate = trans-urocanate + H2O. It functions in the pathway amino-acid degradation; L-histidine degradation into L-glutamate; N-formimidoyl-L-glutamate from L-histidine: step 2/3. Catalyzes the conversion of urocanate to 4-imidazolone-5-propionate. The sequence is that of Urocanate hydratase from Pseudomonas putida (strain GB-1).